The chain runs to 85 residues: Putative membrane protein insertion efficiency factor (85 aa).

This sequence belongs to the UPF0161 family.

The protein localises to the cell inner membrane. Functionally, could be involved in insertion of integral membrane proteins into the membrane. The polypeptide is Putative membrane protein insertion efficiency factor (Dictyoglomus thermophilum (strain ATCC 35947 / DSM 3960 / H-6-12)).